Reading from the N-terminus, the 380-residue chain is Cysteine protease ATG4A (380 aa).

Catalysis depends on Cys-60, which acts as the Nucleophile. Active-site residues include Asp-262 and His-264. The short motif at 375–378 (FEIL) is the LIR element.

It belongs to the peptidase C54 family.

It localises to the cytoplasm. It carries out the reaction [protein]-C-terminal L-amino acid-glycyl-phosphatidylethanolamide + H2O = [protein]-C-terminal L-amino acid-glycine + a 1,2-diacyl-sn-glycero-3-phosphoethanolamine. In terms of biological role, cysteine protease that plays a key role in autophagy by mediating both proteolytic activation and delipidation of ATG8 family proteins. The protease activity is required for proteolytic activation of ATG8 family proteins: cleaves the C-terminal amino acid of ATG8 proteins to reveal a C-terminal glycine. Exposure of the glycine at the C-terminus is essential for ATG8 proteins conjugation to phosphatidylethanolamine (PE) and insertion to membranes, which is necessary for autophagy. Protease activity is also required to counteract formation of high-molecular weight conjugates of ATG8 proteins (ATG8ylation): acts as a deubiquitinating-like enzyme that removes ATG8 conjugated to other proteins, such as ATG3. In addition to the protease activity, also mediates delipidation of ATG8 family proteins. Catalyzes delipidation of PE-conjugated forms of ATG8 proteins during macroautophagy. The polypeptide is Cysteine protease ATG4A (Gallus gallus (Chicken)).